The sequence spans 772 residues: MLRTIILKAGSNASIPSLSRQNKLLRFFATAGAVSRTSPGSIKKIFDDNSYWRNINGQDANNSKISQYLFKKNKTGLFKNPYLTSPDGLRKFSQVSLQQAQELLDKMRNDFSESGKLTYIMNLDRLSDTLCRVIDLCEFIRSTHPDDAFVRAAQDCHEQMFEFMNVLNTDVSLCNMLKSVLNNPEVSSKLSAEELKVGKILLDDFEKSGIYMNPDVREKFIQLSQEISLVGQEFINHTDYPGSNSVKIPCKDLDNSKVSTFLLKQLNKDVKGQNYKVPTFGYAAYALLKSCENEMVRKKLWTALHSCSDKQVKRLSHLIKLRAILANLMHKTSYAEYQLEGKMAKNPKDVQDFILTLMNNTIEKTANELKFIAELKAKDLKKPLTTNTDEILKLVRPWDRDYYTGKYFQLNPSNSPSAKEISYYFTLGNVIQGLSDLFQQIYGIRLEPAITDEGETWSPDVRRLNVISEEEGIIGIIYCDLFERNGKTSNPAHFTVCCSRQIYPSETDFSTIQVGENPDGTYFQLPVISLVCNFSPILIASKKSLCFLQLSEVETLFHEMGHAMHSMLGRTHMQNISGTRCATDFVELPSILMEHFAKDIRILTKIGKHYGTGETIQADMLQRFMKSTNFLQNCETYSQAKMAMLDQSFHDEKIISDIDNFDVVENYQALERRLKVLVDDQSNWCGRFGHLFGYGATYYSYLFDRTIASKIWYALFEDDPYSRKNGDKFKKHLLKWGGLKDPWKCIADVLECPMLEKGGSDAMEFIAQSHKS.

The transit peptide at 1-37 directs the protein to the mitochondrion; sequence MLRTIILKAGSNASIPSLSRQNKLLRFFATAGAVSRT. Histidine 558 provides a ligand contact to Zn(2+). Glutamate 559 is an active-site residue. Positions 562 and 565 each coordinate Zn(2+).

This sequence belongs to the peptidase M3 family. Zn(2+) serves as cofactor.

It is found in the mitochondrion matrix. The catalysed reaction is Release of an N-terminal octapeptide as second stage of processing of some proteins imported into the mitochondrion.. With respect to regulation, stimulated by Fe(2+). In terms of biological role, cleaves proteins, imported into the mitochondrion, to their mature size. While most mitochondrial precursor proteins are processed to the mature form in one step by mitochondrial processing peptidase (MPP), the sequential cleavage by MIP of an octapeptide after initial processing by MPP is a required step for a subgroup of nuclear-encoded precursor proteins destined for the matrix or the inner membrane. Cleaves precursor proteins of respiratory components, including subunits of the electron transport chain and tricarboxylic acid cycle enzymes, and components of the mitochondrial genetic machinery, including ribosomal proteins, translation factors, and proteins required for mitochondrial DNA metabolism. This chain is Mitochondrial intermediate peptidase (OCT1), found in Saccharomyces cerevisiae (strain YJM789) (Baker's yeast).